A 132-amino-acid chain; its full sequence is U-scoloptoxin(05)-Er3a (132 aa).

The signal sequence occupies residues 1 to 19 (MRSWFVFVALLAVVFLPSS).

This sequence belongs to the scoloptoxin-05 family. Contains 5 disulfide bonds. As to expression, expressed by the venom gland.

The protein resides in the secreted. In Ethmostigmus rubripes (Giant centipede), this protein is U-scoloptoxin(05)-Er3a.